Consider the following 149-residue polypeptide: Flagellar assembly factor FliW (149 aa).

The protein belongs to the FliW family. As to quaternary structure, interacts with translational regulator CsrA and flagellin(s).

It is found in the cytoplasm. Functionally, acts as an anti-CsrA protein, binds CsrA and prevents it from repressing translation of its target genes, one of which is flagellin. Binds to flagellin and participates in the assembly of the flagellum. In Thermotoga neapolitana (strain ATCC 49049 / DSM 4359 / NBRC 107923 / NS-E), this protein is Flagellar assembly factor FliW.